We begin with the raw amino-acid sequence, 45 residues long: Large ribosomal subunit protein bL36 (45 aa).

The disordered stretch occupies residues 1–45; that stretch reads MRVSSSIKADPSKGDKLVRRKGRLYVINKKDPNRKQRQAGPARKK.

This sequence belongs to the bacterial ribosomal protein bL36 family.

This chain is Large ribosomal subunit protein bL36, found in Chlamydia trachomatis serovar L2 (strain ATCC VR-902B / DSM 19102 / 434/Bu).